The following is a 293-amino-acid chain: Polyamine aminopropyltransferase (293 aa).

One can recognise a PABS domain in the interval 10-244 (HIWFTEYHNN…GFWSFTLASK (235 aa)). Gln39 provides a ligand contact to S-methyl-5'-thioadenosine. Spermidine contacts are provided by His70 and Asp94. Residues Glu114 and 145-146 (DG) each bind S-methyl-5'-thioadenosine. Asp163 serves as the catalytic Proton acceptor. 163–166 (DCPD) serves as a coordination point for spermidine. An S-methyl-5'-thioadenosine-binding site is contributed by Pro170.

This sequence belongs to the spermidine/spermine synthase family. Homodimer or homotetramer.

Its subcellular location is the cytoplasm. The catalysed reaction is S-adenosyl 3-(methylsulfanyl)propylamine + putrescine = S-methyl-5'-thioadenosine + spermidine + H(+). It functions in the pathway amine and polyamine biosynthesis; spermidine biosynthesis; spermidine from putrescine: step 1/1. In terms of biological role, catalyzes the irreversible transfer of a propylamine group from the amino donor S-adenosylmethioninamine (decarboxy-AdoMet) to putrescine (1,4-diaminobutane) to yield spermidine. This Methanocaldococcus jannaschii (strain ATCC 43067 / DSM 2661 / JAL-1 / JCM 10045 / NBRC 100440) (Methanococcus jannaschii) protein is Polyamine aminopropyltransferase.